The primary structure comprises 270 residues: Probable septum site-determining protein MinC (270 aa).

Residues 105 to 129 (DRRAPSSKAADEAPVQQAEPAAPAA) form a disordered region. Residues 116–129 (EAPVQQAEPAAPAA) are compositionally biased toward low complexity.

It belongs to the MinC family. Interacts with MinD and FtsZ.

Cell division inhibitor that blocks the formation of polar Z ring septums. Rapidly oscillates between the poles of the cell to destabilize FtsZ filaments that have formed before they mature into polar Z rings. Prevents FtsZ polymerization. The sequence is that of Probable septum site-determining protein MinC from Burkholderia pseudomallei (strain 668).